The sequence spans 910 residues: Alanine--tRNA ligase (910 aa).

Basic and acidic residues predominate over residues 488–505 (RHEEKKEDSKSEKGENTA). A disordered region spans residues 488-507 (RHEEKKEDSKSEKGENTAEK). 4 residues coordinate Zn(2+): H614, H618, C718, and H722.

Belongs to the class-II aminoacyl-tRNA synthetase family. The cofactor is Zn(2+).

It localises to the cytoplasm. The catalysed reaction is tRNA(Ala) + L-alanine + ATP = L-alanyl-tRNA(Ala) + AMP + diphosphate. Catalyzes the attachment of alanine to tRNA(Ala) in a two-step reaction: alanine is first activated by ATP to form Ala-AMP and then transferred to the acceptor end of tRNA(Ala). Also edits incorrectly charged Ser-tRNA(Ala) and Gly-tRNA(Ala) via its editing domain. This chain is Alanine--tRNA ligase, found in Methanococcus aeolicus (strain ATCC BAA-1280 / DSM 17508 / OCM 812 / Nankai-3).